A 338-amino-acid polypeptide reads, in one-letter code: Ketol-acid reductoisomerase (NADP(+)) (338 aa).

The region spanning 1–181 (MKVFYDKDAD…GGGRAGIIET (181 aa)) is the KARI N-terminal Rossmann domain. Residues 24–27 (YGSQ), R47, and S52 each bind NADP(+). H107 is an active-site residue. Position 133 (G133) interacts with NADP(+). Positions 182-327 (NFREETETDL…GKLRAMMPWI (146 aa)) constitute a KARI C-terminal knotted domain. 4 residues coordinate Mg(2+): D190, E194, E226, and E230. Position 251 (S251) interacts with substrate.

The protein belongs to the ketol-acid reductoisomerase family. Mg(2+) is required as a cofactor.

The catalysed reaction is (2R)-2,3-dihydroxy-3-methylbutanoate + NADP(+) = (2S)-2-acetolactate + NADPH + H(+). It catalyses the reaction (2R,3R)-2,3-dihydroxy-3-methylpentanoate + NADP(+) = (S)-2-ethyl-2-hydroxy-3-oxobutanoate + NADPH + H(+). Its pathway is amino-acid biosynthesis; L-isoleucine biosynthesis; L-isoleucine from 2-oxobutanoate: step 2/4. It functions in the pathway amino-acid biosynthesis; L-valine biosynthesis; L-valine from pyruvate: step 2/4. Its function is as follows. Involved in the biosynthesis of branched-chain amino acids (BCAA). Catalyzes an alkyl-migration followed by a ketol-acid reduction of (S)-2-acetolactate (S2AL) to yield (R)-2,3-dihydroxy-isovalerate. In the isomerase reaction, S2AL is rearranged via a Mg-dependent methyl migration to produce 3-hydroxy-3-methyl-2-ketobutyrate (HMKB). In the reductase reaction, this 2-ketoacid undergoes a metal-dependent reduction by NADPH to yield (R)-2,3-dihydroxy-isovalerate. This is Ketol-acid reductoisomerase (NADP(+)) from Cupriavidus metallidurans (strain ATCC 43123 / DSM 2839 / NBRC 102507 / CH34) (Ralstonia metallidurans).